Here is a 245-residue protein sequence, read N- to C-terminus: MIIPALDLIDGTVVRLHQGDYGQQRDYGSDPLPRLQAYAAQGAKVLHLVDLTGAKDPAKRQIPLLKSLVAGVDVPVQVGGGVRTEADVAALLEAGVARVVVGSTAVKSPEEVKGWFKRFGPERLVLALDVRIDADGNKQVAVSGWQENSGVTLEELVESYLPVGLQHVLCTDISRDGTLAGSNVSLYEEVCARYPQVAFQSSGGIGDLKDIAALRGTGVRGVIVGRALLEGKFNVTEAIQCWQNG.

Residue Asp-7 is the Proton acceptor of the active site. Residue Asp-129 is the Proton donor of the active site.

The protein belongs to the HisA/HisF family.

It is found in the cytoplasm. The enzyme catalyses 1-(5-phospho-beta-D-ribosyl)-5-[(5-phospho-beta-D-ribosylamino)methylideneamino]imidazole-4-carboxamide = 5-[(5-phospho-1-deoxy-D-ribulos-1-ylimino)methylamino]-1-(5-phospho-beta-D-ribosyl)imidazole-4-carboxamide. Its pathway is amino-acid biosynthesis; L-histidine biosynthesis; L-histidine from 5-phospho-alpha-D-ribose 1-diphosphate: step 4/9. The protein is 1-(5-phosphoribosyl)-5-[(5-phosphoribosylamino)methylideneamino] imidazole-4-carboxamide isomerase of Klebsiella pneumoniae subsp. pneumoniae (strain ATCC 700721 / MGH 78578).